The chain runs to 476 residues: Fatty acid hydroperoxide lyase, chloroplastic (476 aa).

A helical transmembrane segment spans residues 280 to 300 (LLFILGFNAFGGFSIFLPTLL). Cysteine 438 contributes to the heme binding site.

Belongs to the cytochrome P450 family. Heme is required as a cofactor. As to expression, highly expressed in developing flowers and in young leaves. Detected in stems and immature green fruits, but not in mature green and red fruits.

It localises to the plastid. It is found in the chloroplast outer membrane. With respect to regulation, reversibly inhibited by nordihydroguaiaretic acid (NDGA) and irreversibly by salicylic acid. Its function is as follows. Cytochrome P450 of the CYP74B subfamily involved in the biosynthesis of traumatin and C6 aldehydes. Metabolizes 13- but not 9-hydroperoxides of linoleic and linolenic acids. Can use 15S-hydroperoxy-11(Z),13(E),17(Z)-eicosatrienoic acid (15-HPET) and 13S-hydroperoxy-9(Z),11(E),15(Z)-octadecatrienoic acid (13-HPOT) as substrates, but only 5% activity with 13S-hydroperoxy-9(Z),11(E)-octadecadienoic acid (13-HPOD). Produces n-hexanal and 12-oxo-9(Z)-dodecanoic acid from 13-HPOD. This chain is Fatty acid hydroperoxide lyase, chloroplastic, found in Solanum lycopersicum (Tomato).